A 178-amino-acid polypeptide reads, in one-letter code: MSRIGRLPITVPAGVEVKVDGSVVSVKGSKGELSHTVASPIEVSLEDGTLTVARPNDERASRSLHGLTRTLIANMIQGVTAGYEKKLEIVGTGYRVQAKGSDLEFALGYSHPVNVSAPNGITFAVETPTKLSVSGISKQQVGEVAANIRKLRKPDPYKGKGIRYAGEVIRRKVGKAGK.

The protein belongs to the universal ribosomal protein uL6 family. In terms of assembly, part of the 50S ribosomal subunit.

This protein binds to the 23S rRNA, and is important in its secondary structure. It is located near the subunit interface in the base of the L7/L12 stalk, and near the tRNA binding site of the peptidyltransferase center. The sequence is that of Large ribosomal subunit protein uL6 from Arthrobacter sp. (strain FB24).